Consider the following 178-residue polypeptide: Large ribosomal subunit protein uL6 (178 aa).

The protein belongs to the universal ribosomal protein uL6 family. In terms of assembly, part of the 50S ribosomal subunit.

In terms of biological role, this protein binds to the 23S rRNA, and is important in its secondary structure. It is located near the subunit interface in the base of the L7/L12 stalk, and near the tRNA binding site of the peptidyltransferase center. In Opitutus terrae (strain DSM 11246 / JCM 15787 / PB90-1), this protein is Large ribosomal subunit protein uL6.